A 341-amino-acid chain; its full sequence is S-adenosylmethionine:tRNA ribosyltransferase-isomerase (341 aa).

This sequence belongs to the QueA family. In terms of assembly, monomer.

The protein localises to the cytoplasm. The catalysed reaction is 7-aminomethyl-7-carbaguanosine(34) in tRNA + S-adenosyl-L-methionine = epoxyqueuosine(34) in tRNA + adenine + L-methionine + 2 H(+). It participates in tRNA modification; tRNA-queuosine biosynthesis. Its function is as follows. Transfers and isomerizes the ribose moiety from AdoMet to the 7-aminomethyl group of 7-deazaguanine (preQ1-tRNA) to give epoxyqueuosine (oQ-tRNA). This Desulfitobacterium hafniense (strain DSM 10664 / DCB-2) protein is S-adenosylmethionine:tRNA ribosyltransferase-isomerase.